Consider the following 616-residue polypeptide: Dihydroxy-acid dehydratase (616 aa).

D81 provides a ligand contact to Mg(2+). C122 provides a ligand contact to [2Fe-2S] cluster. Residues D123 and K124 each contribute to the Mg(2+) site. The residue at position 124 (K124) is an N6-carboxylysine. C195 serves as a coordination point for [2Fe-2S] cluster. A Mg(2+)-binding site is contributed by E491. S517 serves as the catalytic Proton acceptor.

It belongs to the IlvD/Edd family. As to quaternary structure, homodimer. Requires [2Fe-2S] cluster as cofactor. The cofactor is Mg(2+).

The catalysed reaction is (2R)-2,3-dihydroxy-3-methylbutanoate = 3-methyl-2-oxobutanoate + H2O. The enzyme catalyses (2R,3R)-2,3-dihydroxy-3-methylpentanoate = (S)-3-methyl-2-oxopentanoate + H2O. Its pathway is amino-acid biosynthesis; L-isoleucine biosynthesis; L-isoleucine from 2-oxobutanoate: step 3/4. It participates in amino-acid biosynthesis; L-valine biosynthesis; L-valine from pyruvate: step 3/4. Functions in the biosynthesis of branched-chain amino acids. Catalyzes the dehydration of (2R,3R)-2,3-dihydroxy-3-methylpentanoate (2,3-dihydroxy-3-methylvalerate) into 2-oxo-3-methylpentanoate (2-oxo-3-methylvalerate) and of (2R)-2,3-dihydroxy-3-methylbutanoate (2,3-dihydroxyisovalerate) into 2-oxo-3-methylbutanoate (2-oxoisovalerate), the penultimate precursor to L-isoleucine and L-valine, respectively. This Yersinia pseudotuberculosis serotype O:3 (strain YPIII) protein is Dihydroxy-acid dehydratase.